Reading from the N-terminus, the 144-residue chain is Large ribosomal subunit protein uL15 (144 aa).

Positions 1 to 53 (MYLNTLAPAEGAKHSAKRLGRGIGSGLGKTGGRGHKGQKSRTGGGVRRGFEGG) are disordered. The segment covering 21–31 (RGIGSGLGKTG) has biased composition (gly residues).

It belongs to the universal ribosomal protein uL15 family. As to quaternary structure, part of the 50S ribosomal subunit.

Binds to the 23S rRNA. The polypeptide is Large ribosomal subunit protein uL15 (Mannheimia succiniciproducens (strain KCTC 0769BP / MBEL55E)).